Consider the following 276-residue polypeptide: Mitochondrial outer membrane protein porin 1 (276 aa).

Belongs to the eukaryotic mitochondrial porin (TC 1.B.8.1) family. Expressed in shoot meristems, root meristematic zone, lateral roots, leaves, stigma and anthers.

The protein resides in the mitochondrion outer membrane. Forms a channel through the mitochondrial outer membrane that allows diffusion of small hydrophilic molecules. The channel adopts an open conformation at low or zero membrane potential and a closed conformation at potentials above 30-40 mV. The open state has a weak anion selectivity whereas the closed state is cation-selective. Involved in plant development at reproductive stage, is important for pollen development and may regulate hydrogen peroxide generation during disease resistance. The sequence is that of Mitochondrial outer membrane protein porin 1 (VDAC1) from Arabidopsis thaliana (Mouse-ear cress).